A 486-amino-acid polypeptide reads, in one-letter code: ATP synthase subunit beta (486 aa).

Residue 164 to 171 (GGAGVGKT) participates in ATP binding.

It belongs to the ATPase alpha/beta chains family. F-type ATPases have 2 components, CF(1) - the catalytic core - and CF(0) - the membrane proton channel. CF(1) has five subunits: alpha(3), beta(3), gamma(1), delta(1), epsilon(1). CF(0) has four main subunits: a(1), b(1), b'(1) and c(9-12).

Its subcellular location is the cellular thylakoid membrane. It carries out the reaction ATP + H2O + 4 H(+)(in) = ADP + phosphate + 5 H(+)(out). Its function is as follows. Produces ATP from ADP in the presence of a proton gradient across the membrane. The catalytic sites are hosted primarily by the beta subunits. The chain is ATP synthase subunit beta from Prochlorococcus marinus (strain MIT 9301).